The primary structure comprises 102 residues: Spexin prohormone 1 (102 aa).

Positions 1 to 26 (MKDLRTLAAYALALLLLATFVSYSRS) are cleaved as a signal peptide. The propeptide occupies 27–35 (APMGSFQRR). Q49 carries the glutamine amide modification. Positions 50 to 102 (GRRFVSEDRNEGDLYDTIRLESQSQNTENLSISKAAAFLLNVLQQARDEGEPY) are excised as a propeptide.

The protein belongs to the spexin family. Expressed in the anterior hypothalamus, ventromedial thalamic nucleus and medial longitudinal fasciculus of the brain (at protein level). Widely expressed. Expressed predominantly in the spleen, kidney, liver and testis. Expressed in olfactory bulb, pituitary, telencephalon, diencephalons, spinal cord, optic tectum, cerebellum and hypothalamus of the brain.

It localises to the secreted. The protein resides in the extracellular space. The protein localises to the cytoplasmic vesicle. Its subcellular location is the secretory vesicle. Its function is as follows. Plays a role in the regulation of food intake and body weight and in reproduction. May also play a role as a central modulator of cardiovascular and renal function and nociception. Brain administration of the peptide inhibits food consumption. May function as a satiety factor for feeding control. Involved in the negative regulation of the reproductive axis by inhibiting luteinizing hormone secretion from pituitary cells. This Carassius auratus (Goldfish) protein is Spexin prohormone 1 (spx).